We begin with the raw amino-acid sequence, 373 residues long: Transaldolase (373 aa).

Residue lysine 143 is the Schiff-base intermediate with substrate of the active site.

This sequence belongs to the transaldolase family. Type 2 subfamily.

It localises to the cytoplasm. It catalyses the reaction D-sedoheptulose 7-phosphate + D-glyceraldehyde 3-phosphate = D-erythrose 4-phosphate + beta-D-fructose 6-phosphate. Its pathway is carbohydrate degradation; pentose phosphate pathway; D-glyceraldehyde 3-phosphate and beta-D-fructose 6-phosphate from D-ribose 5-phosphate and D-xylulose 5-phosphate (non-oxidative stage): step 2/3. Functionally, transaldolase is important for the balance of metabolites in the pentose-phosphate pathway. In Mycobacterium marinum (strain ATCC BAA-535 / M), this protein is Transaldolase.